Here is a 141-residue protein sequence, read N- to C-terminus: Aspartate 1-decarboxylase 1 (141 aa).

Catalysis depends on Ser25, which acts as the Schiff-base intermediate with substrate; via pyruvic acid. Ser25 carries the pyruvic acid (Ser) modification. Substrate is bound at residue Thr57. The Proton donor role is filled by Tyr58. 73–75 (GPA) provides a ligand contact to substrate.

This sequence belongs to the PanD family. In terms of assembly, heterooctamer of four alpha and four beta subunits. Pyruvate serves as cofactor. Post-translationally, is synthesized initially as an inactive proenzyme, which is activated by self-cleavage at a specific serine bond to produce a beta-subunit with a hydroxyl group at its C-terminus and an alpha-subunit with a pyruvoyl group at its N-terminus.

The protein resides in the cytoplasm. It catalyses the reaction L-aspartate + H(+) = beta-alanine + CO2. It functions in the pathway cofactor biosynthesis; (R)-pantothenate biosynthesis; beta-alanine from L-aspartate: step 1/1. Its function is as follows. Catalyzes the pyruvoyl-dependent decarboxylation of aspartate to produce beta-alanine. The protein is Aspartate 1-decarboxylase 1 of Paenarthrobacter aurescens (strain TC1).